A 37-amino-acid polypeptide reads, in one-letter code: Hemocyanin subunit B (37 aa).

This sequence belongs to the tyrosinase family. Hemocyanin subfamily. As to expression, hemolymph.

Its subcellular location is the secreted. It localises to the extracellular space. Hemocyanins are copper-containing oxygen carriers occurring freely dissolved in the hemolymph of many mollusks and arthropods. The protein is Hemocyanin subunit B of Cancer pagurus (Rock crab).